We begin with the raw amino-acid sequence, 125 residues long: Fluoride-specific ion channel FluC (125 aa).

Transmembrane regions (helical) follow at residues 1–21 (MIQA…RYYV), 32–52 (AFPW…GVFA), 68–88 (LLIT…LDAI), and 101–121 (IYIA…LAVM). Na(+) is bound by residues Gly75 and Thr78.

The protein belongs to the fluoride channel Fluc/FEX (TC 1.A.43) family.

Its subcellular location is the cell inner membrane. The catalysed reaction is fluoride(in) = fluoride(out). Its activity is regulated as follows. Na(+) is not transported, but it plays an essential structural role and its presence is essential for fluoride channel function. Its function is as follows. Fluoride-specific ion channel. Important for reducing fluoride concentration in the cell, thus reducing its toxicity. The polypeptide is Fluoride-specific ion channel FluC (Rhizobium etli (strain CIAT 652)).